The following is a 1053-amino-acid chain: Prestalk protein (1053 aa).

Residues 1–18 (MNKIYLILILFTFVGIIL) form the signal peptide. An X-1 repeat occupies 38 to 60 (NKCTLDKCNNGCCSNTPININDN). Residues 38-1019 (NKCTLDKCNN…VHTPVDCNDN (982 aa)) are 41 X 24 AA tandem repeats, Cys-rich. Residues 61–84 (DECTVDTCNPKTGISHTPVNCDDG) form an X-2 repeat. An X-3 repeat occupies 85–108 (NSCTADSCLCGKGCQHVPIACDDN). One copy of the A-1 repeat lies at 109–132 (NACTVDSCSNSTGCCHTPLSCDDN). One copy of the A-2 repeat lies at 133 to 156 (NPCTVDSCSNSTGCCHTPINVDDH). A B-1 repeat occupies 157-180 (NACTEDKCTQSGGVTHTPIACDDK). Residues 181–204 (NACTVDSCSNSTGCCHTPLSCDDN) form an A-3 repeat. Residues 205–228 (NACTVDSCSNSTGCVHTPINVDDH) form an A-4 repeat. One copy of the B-2 repeat lies at 229–252 (NACTEDKCTQSGGVTHTPIACDDK). The stretch at 253 to 276 (NACTADSCSNSTGCCHTPITCDDN) is one A-5 repeat. One copy of the A-6 repeat lies at 277–300 (NACTVDSCSNSTGCCHTPINVDDN). Residues 301–324 (NACTEDKCTQSGGVTHTPIACDDK) form a B-3 repeat. An A-7 repeat occupies 325-348 (NACTVDSCSNSTGCVHTPLACDDK). Residues 349 to 372 (NPCTVDSCSNSTGCCHTPINVDDN) form an A-8 repeat. A B-4 repeat occupies 373–396 (NACTEDKCTQSGGVTHTPINCDDN). An A-9 repeat occupies 397-420 (NKCTVDSCSNSTGCCHTPMSCDDN). One copy of the A-10 repeat lies at 421–444 (NPCTVDSCSNSTGCVHTPINVDDN). One copy of the B-5 repeat lies at 445-468 (NACTEDKCTQNGGVTHTPIACDDK). An A-11 repeat occupies 469-492 (NACTVDSCSNSTGCCHTPLKCDDN). Residues 493-516 (NACTVDSCSNSTGCVHTPINVDDN) form an A-12 repeat. Residues 517-540 (NACTEDKCTQSGGVTHTPISCDDK) form a B-6 repeat. The A-13 repeat unit spans residues 541–564 (NPCTIDSCSNSTGCVHTPMSCDDR). The stretch at 565–588 (NPCTSDFCSWEKGCQHVALSCNDF) is one X-4 repeat. The A-14 repeat unit spans residues 589–612 (NACTMDSCSNSTGCTHTPIACDDK). The A-15 repeat unit spans residues 613-636 (NACTVDSCSNSTGCVHTPLTCDDN). One copy of the A-16 repeat lies at 637–660 (NPCTVDSCSNSTGCCHTPINVDDH). Residues 661–684 (NACTEDKCTQSGGVTHTPIACDDK) form a B-7 repeat. One copy of the A-17 repeat lies at 685 to 708 (NACTVDSCSNSTGCCHTPLSCDDN). The stretch at 709-732 (NACTVDSCSNSTGCVHTPINVDDN) is one A-18 repeat. One copy of the B-8 repeat lies at 733-756 (NACTEDKCTQNGGVTHTPIACDDK). Residues 757 to 780 (NACTVDSCSNSTGCCHTPLKCDDN) form an A-19 repeat. One copy of the A-20 repeat lies at 781–804 (NPCTVDSCSNSTGCVHTPMNVDDN). The stretch at 805 to 828 (NACTEDKCTQNGGVTHTPIRCDDL) is one B-9 repeat. The A-21 repeat unit spans residues 829 to 852 (NSCTADSCSNSTGCVHTPINCDDN). The stretch at 853–876 (NKCTADSCSNSTGCCHTPISCDDN) is one A-22 repeat. The stretch at 877–900 (NPCTVDSCSNSTGCCHTPINVDDN) is one A-23 repeat. Residues 901 to 924 (NPCTEDKCTQSGGVTHTPIGCNDN) form a B-10 repeat. An A-24 repeat occupies 925-948 (NACTVDSCSNSTGCTHTPMKCDDN). One copy of the A-25 repeat lies at 949–971 (NPCTIDSCSNSTGCVHTPMNCDD). An A-26 repeat occupies 972 to 995 (GNFCTLDSCCSTGCTHTPIIIDDN). The A-27 repeat unit spans residues 996–1019 (NPCTVDSCCNSTGVVHTPVDCNDN).

The protein localises to the secreted. Its subcellular location is the extracellular space. It is found in the extracellular matrix. Component of the stalk tube, the matrix that encases stalk cells. This is Prestalk protein (ecmB) from Dictyostelium discoideum (Social amoeba).